The primary structure comprises 200 residues: Small ribosomal subunit protein uS4 (200 aa).

The interval 21-42 (GTGKELQKRPYPPGQHGPGQRR) is disordered. The region spanning 92 to 155 (SRLDNLVYRL…RNLQVIKEAI (64 aa)) is the S4 RNA-binding domain.

Belongs to the universal ribosomal protein uS4 family. Part of the 30S ribosomal subunit. Contacts protein S5. The interaction surface between S4 and S5 is involved in control of translational fidelity.

Functionally, one of the primary rRNA binding proteins, it binds directly to 16S rRNA where it nucleates assembly of the body of the 30S subunit. In terms of biological role, with S5 and S12 plays an important role in translational accuracy. This Geobacillus thermodenitrificans (strain NG80-2) protein is Small ribosomal subunit protein uS4.